The sequence spans 704 residues: Polyribonucleotide nucleotidyltransferase (704 aa).

Residues Asp-487 and Asp-493 each contribute to the Mg(2+) site. The 60-residue stretch at 554 to 613 (PRLLTIKIHPDKIREVIGKGGSTIQAITKETGTQIDIQDDGTIIIASVNAIAAQAAKSRI) folds into the KH domain. An S1 motif domain is found at 623–691 (GRIYEGKVAK…KQGRIRLSIK (69 aa)).

It belongs to the polyribonucleotide nucleotidyltransferase family. In terms of assembly, component of the RNA degradosome, which is a multiprotein complex involved in RNA processing and mRNA degradation. Mg(2+) is required as a cofactor.

Its subcellular location is the cytoplasm. It carries out the reaction RNA(n+1) + phosphate = RNA(n) + a ribonucleoside 5'-diphosphate. Involved in mRNA degradation. Catalyzes the phosphorolysis of single-stranded polyribonucleotides processively in the 3'- to 5'-direction. This chain is Polyribonucleotide nucleotidyltransferase, found in Xanthomonas euvesicatoria pv. vesicatoria (strain 85-10) (Xanthomonas campestris pv. vesicatoria).